The chain runs to 103 residues: Histone H4 (103 aa).

Residues 1-14 (MSGRGKGGKGLGKG) show a composition bias toward gly residues. The disordered stretch occupies residues 1-20 (MSGRGKGGKGLGKGGAKRHR). N6-acetyl-N6-methyllysine; alternate is present on lysine 6. N6-methyllysine; alternate is present on residues lysine 6, lysine 9, and lysine 13. At lysine 13 the chain carries N6-acetyl-N6-methyllysine; alternate. A DNA-binding region spans residues 17 to 21 (KRHRK). N6-glutaryllysine is present on lysine 92.

Belongs to the histone H4 family. In terms of assembly, the nucleosome is a histone octamer containing two molecules each of H2A, H2B, H3 and H4 assembled in one H3-H4 heterotetramer and two H2A-H2B heterodimers. The octamer wraps approximately 147 bp of DNA. In terms of processing, glutarylation at Lys-92 (H4K91glu) destabilizes nucleosomes by promoting dissociation of the H2A-H2B dimers from nucleosomes.

It localises to the nucleus. The protein localises to the chromosome. Core component of nucleosome. Nucleosomes wrap and compact DNA into chromatin, limiting DNA accessibility to the cellular machineries which require DNA as a template. Histones thereby play a central role in transcription regulation, DNA repair, DNA replication and chromosomal stability. DNA accessibility is regulated via a complex set of post-translational modifications of histones, also called histone code, and nucleosome remodeling. This Mycosarcoma maydis (Corn smut fungus) protein is Histone H4 (HHF1).